The following is a 418-amino-acid chain: Nuclear hormone receptor family member nhr-209 (418 aa).

Positions 43-121 (PEKCAVCKNA…VGMDSTAIRA (79 aa)) form a DNA-binding region, nuclear receptor. 2 consecutive NR C4-type zinc fingers follow at residues 46-66 (CAVC…CNGC) and 82-104 (CMNH…CKGC). The region spanning 174–414 (TIPDGFEDMR…SHPPKSLFDE (241 aa)) is the NR LBD domain. An AF-2 region spans residues 403–414 (ECSHPPKSLFDE).

It belongs to the nuclear hormone receptor family.

It is found in the nucleus. Functionally, transcriptional regulator. Plays a role in modulation of lifespan and immunity. The chain is Nuclear hormone receptor family member nhr-209 from Caenorhabditis elegans.